The following is a 274-amino-acid chain: Undecaprenyl-diphosphatase 1 (274 aa).

Helical transmembrane passes span 8 to 28, 45 to 65, 92 to 112, 120 to 140, 195 to 215, 230 to 250, and 253 to 273; these read WLLI…PIPV, IEGL…VIAI, FRIS…ALLF, LKQL…LWLI, FSFF…ISDI, IAFI…MNIM, and GKLI…LSLL.

The protein belongs to the UppP family.

The protein resides in the cell membrane. It carries out the reaction di-trans,octa-cis-undecaprenyl diphosphate + H2O = di-trans,octa-cis-undecaprenyl phosphate + phosphate + H(+). Catalyzes the dephosphorylation of undecaprenyl diphosphate (UPP). Confers resistance to bacitracin. The protein is Undecaprenyl-diphosphatase 1 of Halalkalibacterium halodurans (strain ATCC BAA-125 / DSM 18197 / FERM 7344 / JCM 9153 / C-125) (Bacillus halodurans).